Consider the following 247-residue polypeptide: LHFPL tetraspan subfamily member 4 protein (247 aa).

The next 4 membrane-spanning stretches (helical) occupy residues Ile22–Ile42, Phe97–Phe117, Ile127–Pro147, and Ile178–Gly198.

The protein belongs to the LHFP family. In terms of assembly, interacts with GABA(A) receptor subunits. Interacts with GABRB3. Interacts with GABRA2. Interacts with GABRG2. Identified in a complex of 720 kDa composed of LHFPL4, NLGN2, GABRA1, GABRB2, GABRG2 and GABRB3. Interacts with GABRA1. Interacts with NLGN2; leading to mutual regulation of protein level and synaptic clustering.

The protein resides in the cell projection. Its subcellular location is the dendrite. It localises to the postsynaptic cell membrane. Functionally, plays a role in the regulation of inhibitory synapse formation and function by being involved in maintening gamma-aminobutyric acid receptors (GABAARs) clustering and their associated scaffold proteins at inhibitory synaptic sites. Acts in concert with NLGN2 to recruit or stabilize GABAARs. This is LHFPL tetraspan subfamily member 4 protein from Bos taurus (Bovine).